The sequence spans 451 residues: Glycylpeptide N-tetradecanoyltransferase (451 aa).

Residues 177–179 (LCI) and 185–189 (NKRLA) contribute to the tetradecanoyl-CoA site. The Proton acceptor; via carboxylate role is filled by L451.

Belongs to the NMT family. Monomer.

It is found in the cytoplasm. It catalyses the reaction N-terminal glycyl-[protein] + tetradecanoyl-CoA = N-tetradecanoylglycyl-[protein] + CoA + H(+). Competitively inhibited by SC-58272, a peptidomimetic derived from the N-terminal sequence of a natural substrate. In terms of biological role, adds a myristoyl group to the N-terminal glycine residue of certain cellular proteins. Substrate specificity requires an N-terminal glycine in the nascent polypeptide substrates. Ser is present at position 5 in almost all known N-myristoyl proteins and Lys is commonly encountered at postion 6. Basic residues are preferred at positions 7 and 8. In Candida albicans (strain SC5314 / ATCC MYA-2876) (Yeast), this protein is Glycylpeptide N-tetradecanoyltransferase (NMT1).